The sequence spans 386 residues: Ribosomal RNA small subunit methyltransferase H (386 aa).

S-adenosyl-L-methionine is bound by residues 97–99 (GGH), D116, Y143, D167, and Q174.

It belongs to the methyltransferase superfamily. RsmH family.

Its subcellular location is the cytoplasm. The catalysed reaction is cytidine(1402) in 16S rRNA + S-adenosyl-L-methionine = N(4)-methylcytidine(1402) in 16S rRNA + S-adenosyl-L-homocysteine + H(+). Its function is as follows. Specifically methylates the N4 position of cytidine in position 1402 (C1402) of 16S rRNA. This chain is Ribosomal RNA small subunit methyltransferase H, found in Mycobacterium avium (strain 104).